The sequence spans 293 residues: MDLGKVITAMVTPIHPEKDKVCKKRIHHLVNHLIKNGSDGLVIAGTTGESPTLSHDEKIKLFRQVIETNDGRAKLIAGTGSNNTAETIAFTKEVATLGGMDAVLIVAPYYNKPNQDGLYAHFAAVAEASDLPVVIYNIPGRSVVNIEPETIIRLAKLPNIVGVKESSGNLDNISKIIAETSDDFQVYSGDDSLTLPILAVGGNGVISVASHIVGNEMQEMIQAFERGEVQKAAQIHRELLPLMNGLFSVPNPAPTKYLLNQQGISVGPVRLPLVDLNAEQGTKLQAILEGLSK.

Position 47 (threonine 47) interacts with pyruvate. The Proton donor/acceptor role is filled by tyrosine 136. Lysine 164 (schiff-base intermediate with substrate) is an active-site residue. Isoleucine 206 serves as a coordination point for pyruvate.

It belongs to the DapA family. Homotetramer; dimer of dimers.

It localises to the cytoplasm. The catalysed reaction is L-aspartate 4-semialdehyde + pyruvate = (2S,4S)-4-hydroxy-2,3,4,5-tetrahydrodipicolinate + H2O + H(+). Its pathway is amino-acid biosynthesis; L-lysine biosynthesis via DAP pathway; (S)-tetrahydrodipicolinate from L-aspartate: step 3/4. Functionally, catalyzes the condensation of (S)-aspartate-beta-semialdehyde [(S)-ASA] and pyruvate to 4-hydroxy-tetrahydrodipicolinate (HTPA). This chain is 4-hydroxy-tetrahydrodipicolinate synthase, found in Listeria monocytogenes serovar 1/2a (strain ATCC BAA-679 / EGD-e).